Here is a 340-residue protein sequence, read N- to C-terminus: DnaJ homolog subfamily B member 1 (340 aa).

A J domain is found at 2-70; that stretch reads GKDYYQTLGL…REIFDRYGEE (69 aa). The tract at residues 68-90 is disordered; that stretch reads GEEGLKGSGPSGGSSGGTNGTSF. Residues 73 to 86 show a composition bias toward gly residues; sequence KGSGPSGGSSGGTN. A Phosphothreonine modification is found at T307.

In terms of assembly, interacts with DNAJC3. Interacts with HSF1 (via transactivation domain); this interaction results in the inhibition of heat shock- and HSF1-induced transcriptional activity during the attenuation and recovery phase period of the heat shock response. Interacts with BAG3.

It localises to the cytoplasm. Its subcellular location is the nucleus. It is found in the nucleolus. Its function is as follows. Interacts with HSP70 and can stimulate its ATPase activity. Stimulates the association between HSC70 and HIP. Negatively regulates heat shock-induced HSF1 transcriptional activity during the attenuation and recovery phase period of the heat shock response. Stimulates ATP hydrolysis and the folding of unfolded proteins mediated by HSPA1A/B (in vitro). This chain is DnaJ homolog subfamily B member 1 (DNAJB1), found in Bos taurus (Bovine).